The chain runs to 419 residues: Carbohydrate sulfotransferase 12 (419 aa).

Residues 1-5 (MTKPR) lie on the Cytoplasmic side of the membrane. The chain crosses the membrane as a helical; Signal-anchor for type II membrane protein span at residues 6–26 (LFRLWLVLGSALMILLIIVYW). Over 27-419 (DNVGTAHFYL…YPKPENLLRD (393 aa)) the chain is Lumenal. Positions 78 to 87 (HNDLSRRKTE) are enriched in basic and acidic residues. The disordered stretch occupies residues 78–99 (HNDLSRRKTEQPPVPAPSKPVL). Asn-139 carries N-linked (GlcNAc...) asparagine glycosylation. 176–182 (PKVACTN) is a 3'-phosphoadenylyl sulfate binding site. The N-linked (GlcNAc...) asparagine glycan is linked to Asn-214. 250–258 (RDPFVRLIS) contacts 3'-phosphoadenylyl sulfate. N-linked (GlcNAc...) asparagine glycans are attached at residues Asn-285 and Asn-375.

The protein belongs to the sulfotransferase 2 family.

The protein localises to the golgi apparatus membrane. It catalyses the reaction chondroitin beta-D-glucuronate + n 3'-phosphoadenylyl sulfate = chondroitin 4'-sulfate + n adenosine 3',5'-bisphosphate + n H(+). In terms of biological role, catalyzes the transfer of sulfate to position 4 of the N-acetylgalactosamine (GalNAc) residue of chondroitin and desulfated dermatan sulfate. Chondroitin sulfate constitutes the predominant proteoglycan present in cartilage and is distributed on the surfaces of many cells and extracellular matrices. Activity toward partially desulfated dermatan sulfate is however lower. Does not form 4, 6-di-O-sulfated GalNAc when chondroitin sulfate C is used as an acceptor. This Mus musculus (Mouse) protein is Carbohydrate sulfotransferase 12 (Chst12).